The sequence spans 461 residues: MAAAAAAATVEAVGVAGGRRRRSGSVALGDLLRREASAERASASASAGAGGRERERRPSVAAGQACRAKKGEDFALLKPACERLPAGGAPFSAFALFDGHNGSGAAVYAKENILSNVMCCVPADLSGDEWLAALPRALVAGFVKTDKDFQTRAHSSGTTVTFVIIDGYVVTVASVGDSRCVLEAEGTIYHLSADHRFDASEEEVGRVTECGGEVGRLNVVGGAEIGPLRCWPGGLCLSRSIGDQDVGEFIIPVPYVKQIKLSSAGGRIIISSDGVWDALTVDTAFSCARGLPPEAAADQIVKEAIASKGLRDDTTCIVIDIIPPEKISPTVQPAKKAGKGLFKNIFYKKATSDSPCHADKDQCTQPDLVEEVFEDGCPSLSRRLDSEYPVRNMFKLFICAICQVELESGQGISIHEGLSKSGKLRPWDGPFLCHSCQEKKEAMEGKRHSRDSSSRNSGSSE.

Residues 34–63 (REASAERASASASAGAGGRERERRPSVAAG) form a disordered region. Positions 57 to 321 (RPSVAAGQAC…DDTTCIVIDI (265 aa)) constitute a PPM-type phosphatase domain. Mn(2+)-binding residues include Asp98, Gly99, Asp273, and Asp312. Over residues 439 to 453 (KKEAMEGKRHSRDSS) the composition is skewed to basic and acidic residues. The tract at residues 439–461 (KKEAMEGKRHSRDSSSRNSGSSE) is disordered.

It belongs to the PP2C family. The cofactor is Mg(2+). Requires Mn(2+) as cofactor. In terms of tissue distribution, expressed in leaves, leaf sheaths, panicles, nodes and internodes. Expressed at low levels in roots and stems.

Its subcellular location is the nucleus. It localises to the cytoplasm. It catalyses the reaction O-phospho-L-seryl-[protein] + H2O = L-seryl-[protein] + phosphate. The catalysed reaction is O-phospho-L-threonyl-[protein] + H2O = L-threonyl-[protein] + phosphate. Functionally, mediates the negative regulation of osmotic and salt stress tolerance through regulation of the jasmonate and abscisic acid signaling pathways and modulation of the raffinose family oligosaccharide metabolism pathway. The chain is Probable protein phosphatase 2C 40 from Oryza sativa subsp. japonica (Rice).